The chain runs to 185 residues: Crossover junction endodeoxyribonuclease RuvC (185 aa).

Active-site residues include D7, E68, and D141. Residues D7, E68, and D141 each coordinate Mg(2+).

The protein belongs to the RuvC family. In terms of assembly, homodimer which binds Holliday junction (HJ) DNA. The HJ becomes 2-fold symmetrical on binding to RuvC with unstacked arms; it has a different conformation from HJ DNA in complex with RuvA. In the full resolvosome a probable DNA-RuvA(4)-RuvB(12)-RuvC(2) complex forms which resolves the HJ. Requires Mg(2+) as cofactor.

The protein resides in the cytoplasm. The catalysed reaction is Endonucleolytic cleavage at a junction such as a reciprocal single-stranded crossover between two homologous DNA duplexes (Holliday junction).. Its function is as follows. The RuvA-RuvB-RuvC complex processes Holliday junction (HJ) DNA during genetic recombination and DNA repair. Endonuclease that resolves HJ intermediates. Cleaves cruciform DNA by making single-stranded nicks across the HJ at symmetrical positions within the homologous arms, yielding a 5'-phosphate and a 3'-hydroxyl group; requires a central core of homology in the junction. The consensus cleavage sequence is 5'-(A/T)TT(C/G)-3'. Cleavage occurs on the 3'-side of the TT dinucleotide at the point of strand exchange. HJ branch migration catalyzed by RuvA-RuvB allows RuvC to scan DNA until it finds its consensus sequence, where it cleaves and resolves the cruciform DNA. This chain is Crossover junction endodeoxyribonuclease RuvC, found in Mycobacterium sp. (strain MCS).